The sequence spans 265 residues: Mlc titration factor A (265 aa).

Zn(2+) contacts are provided by His111, His148, His152, and Glu211.

Belongs to the MtfA family. Interacts with Mlc. The cofactor is Zn(2+).

It localises to the cytoplasm. In terms of biological role, involved in the modulation of the activity of the glucose-phosphotransferase system (glucose-PTS). Interacts with the transcriptional repressor Mlc, preventing its interaction with DNA and leading to the modulation of expression of genes regulated by Mlc, including ptsG, which encodes the PTS system glucose-specific EIICB component. Shows zinc-dependent metallopeptidase activity. This Salmonella agona (strain SL483) protein is Mlc titration factor A.